Reading from the N-terminus, the 444-residue chain is Phosphoglucosamine mutase (444 aa).

Catalysis depends on S101, which acts as the Phosphoserine intermediate. Mg(2+) is bound by residues S101, D240, D242, and D244. A Phosphoserine modification is found at S101.

Belongs to the phosphohexose mutase family. It depends on Mg(2+) as a cofactor. Post-translationally, activated by phosphorylation.

It catalyses the reaction alpha-D-glucosamine 1-phosphate = D-glucosamine 6-phosphate. Functionally, catalyzes the conversion of glucosamine-6-phosphate to glucosamine-1-phosphate. The sequence is that of Phosphoglucosamine mutase from Photobacterium profundum (strain SS9).